We begin with the raw amino-acid sequence, 178 residues long: Large ribosomal subunit protein uL6 (178 aa).

The protein belongs to the universal ribosomal protein uL6 family. Part of the 50S ribosomal subunit.

Functionally, this protein binds to the 23S rRNA, and is important in its secondary structure. It is located near the subunit interface in the base of the L7/L12 stalk, and near the tRNA binding site of the peptidyltransferase center. In Streptococcus agalactiae serotype Ia (strain ATCC 27591 / A909 / CDC SS700), this protein is Large ribosomal subunit protein uL6.